A 432-amino-acid chain; its full sequence is MTNLLWQKPGVAVDAKIQSFLAGDDVILDREFFLYDIAASKAHAQGLQHIGILSLQELGGLSEQLDLLAADFRSGAFVLDAQYEDCHSAIEARLTERLGDAGRKIHTGRSRNDQILVATRLWLKDKLQRVATLSAEIAEVALERAQAEAELPVPGYTHIQRAVVSSAGMWWAGWAEAFIDNAVRAGDTVHLVDSNPLGTAAGYGVNLPLDRAHTTAELGFARLLVSPIYAQLSRGKYELAALEALGSATLDLRRIAWDLSLFTSGEFAFVALPAQYTTGSSIMPNKRNPDVIELMRATHASVAAARTEIEQLLSLPSGYHRDLQSSKGAIVHGFGRGLAALELLPALLANLEWRPDKLRAAIDSGMYATDVAVEAAVAGVPFREAYKAAAQASETAGQGRTPEGSLAARVSPGAAADLQLDVLQARWQALRA.

Belongs to the lyase 1 family. Argininosuccinate lyase subfamily.

Its subcellular location is the cytoplasm. It catalyses the reaction 2-(N(omega)-L-arginino)succinate = fumarate + L-arginine. The protein operates within amino-acid biosynthesis; L-arginine biosynthesis; L-arginine from L-ornithine and carbamoyl phosphate: step 3/3. This chain is Argininosuccinate lyase, found in Xanthomonas axonopodis pv. citri (strain 306).